A 199-amino-acid chain; its full sequence is Photosystem I reaction center subunit XI (199 aa).

Helical transmembrane passes span 108-128 and 165-185; these read ITAG…LLVL and FWLG…TLHL.

Belongs to the PsaL family.

The protein resides in the cellular thylakoid membrane. The protein is Photosystem I reaction center subunit XI of Prochlorococcus marinus (strain MIT 9515).